A 452-amino-acid chain; its full sequence is UDP-glycosyltransferase 79B11 (452 aa).

Residues Ser-260, 319-325 (VQQPSWQ), 340-348 (HCGFGSMWE), and 362-365 (LNDQ) each bind UDP-alpha-D-glucose.

The protein belongs to the UDP-glycosyltransferase family.

The polypeptide is UDP-glycosyltransferase 79B11 (UGT79B11) (Arabidopsis thaliana (Mouse-ear cress)).